The following is a 129-amino-acid chain: Small ribosomal subunit protein uS8 (129 aa).

This sequence belongs to the universal ribosomal protein uS8 family. Part of the 30S ribosomal subunit.

Functionally, one of the primary rRNA binding proteins, it binds directly to 16S rRNA central domain where it helps coordinate assembly of the platform of the 30S subunit. The protein is Small ribosomal subunit protein uS8 of Methanothrix thermoacetophila (strain DSM 6194 / JCM 14653 / NBRC 101360 / PT) (Methanosaeta thermophila).